Here is a 190-residue protein sequence, read N- to C-terminus: ATP synthase subunit b, chloroplastic (190 aa).

The chain crosses the membrane as a helical span at residues 35-55 (LSVVLGVLIFFGKGVCASCLL).

The protein belongs to the ATPase B chain family. In terms of assembly, F-type ATPases have 2 components, F(1) - the catalytic core - and F(0) - the membrane proton channel. F(1) has five subunits: alpha(3), beta(3), gamma(1), delta(1), epsilon(1). F(0) has four main subunits: a(1), b(1), b'(1) and c(10-14). The alpha and beta chains form an alternating ring which encloses part of the gamma chain. F(1) is attached to F(0) by a central stalk formed by the gamma and epsilon chains, while a peripheral stalk is formed by the delta, b and b' chains.

It localises to the plastid. The protein localises to the chloroplast thylakoid membrane. In terms of biological role, f(1)F(0) ATP synthase produces ATP from ADP in the presence of a proton or sodium gradient. F-type ATPases consist of two structural domains, F(1) containing the extramembraneous catalytic core and F(0) containing the membrane proton channel, linked together by a central stalk and a peripheral stalk. During catalysis, ATP synthesis in the catalytic domain of F(1) is coupled via a rotary mechanism of the central stalk subunits to proton translocation. Its function is as follows. Component of the F(0) channel, it forms part of the peripheral stalk, linking F(1) to F(0). The polypeptide is ATP synthase subunit b, chloroplastic (Coffea arabica (Arabian coffee)).